The following is a 179-amino-acid chain: Transcription termination/antitermination protein NusG (179 aa).

In terms of domain architecture, KOW spans 130–157 (EGDVVQIIDGAFMGQEGRVVEIENNKVK).

Belongs to the NusG family.

In terms of biological role, participates in transcription elongation, termination and antitermination. In Streptococcus pyogenes serotype M1, this protein is Transcription termination/antitermination protein NusG.